We begin with the raw amino-acid sequence, 86 residues long: Small ribosomal subunit protein bS16 (86 aa).

This sequence belongs to the bacterial ribosomal protein bS16 family.

The polypeptide is Small ribosomal subunit protein bS16 (Leptothrix cholodnii (strain ATCC 51168 / LMG 8142 / SP-6) (Leptothrix discophora (strain SP-6))).